We begin with the raw amino-acid sequence, 441 residues long: Cysteine--tRNA ligase (441 aa).

Residue C24 coordinates Zn(2+). Residues 26-36 carry the 'HIGH' region motif; that stretch reads PTIYDYIHIGN. The Zn(2+) site is built by C204, H230, and E234. Positions 262-266 match the 'KMSKS' region motif; that stretch reads KMSKS. ATP is bound at residue K265.

The protein belongs to the class-I aminoacyl-tRNA synthetase family. Monomer. Zn(2+) is required as a cofactor.

Its subcellular location is the cytoplasm. The catalysed reaction is tRNA(Cys) + L-cysteine + ATP = L-cysteinyl-tRNA(Cys) + AMP + diphosphate. The protein is Cysteine--tRNA ligase of Mesoplasma florum (strain ATCC 33453 / NBRC 100688 / NCTC 11704 / L1) (Acholeplasma florum).